Here is an 87-residue protein sequence, read N- to C-terminus: Ragulator complex protein LAMTOR4 homolog (87 aa).

Belongs to the LAMTOR4 family. Part of the Ragulator complex.

It is found in the lysosome. In terms of biological role, regulator of the TOR pathway, a signaling cascade that promotes cell growth in response to growth factors, energy levels, and amino acids. As part of the Ragulator complex, may activate the TOR signaling cascade in response to amino acids. The sequence is that of Ragulator complex protein LAMTOR4 homolog from Dictyostelium discoideum (Social amoeba).